A 432-amino-acid chain; its full sequence is Casein kinase II subunit alpha-4, chloroplastic (432 aa).

The N-terminal 55 residues, 1–55 (MALRPCTGFTISSLRNASAANNNLFSLLSFSSSSPAKRNLLLSSLQDNLRRFASS), are a transit peptide targeting the chloroplast. The interval 63–83 (LRNQQQQHQQQQQSRVKEKSE) is disordered. Residues 66-75 (QQQQHQQQQQ) are compositionally biased toward low complexity. The region spanning 132-417 (YEVVRKVGRG…AKEAMAHPYF (286 aa)) is the Protein kinase domain. ATP contacts are provided by residues 138-146 (VGRGKYSEV) and K161. D249 (proton acceptor) is an active-site residue.

It belongs to the protein kinase superfamily. Ser/Thr protein kinase family. CK2 subfamily. In terms of assembly, tetramer of two alpha and two beta chains. In terms of tissue distribution, expressed in root tips, lateral root primordia, cotyledons, leaf primordia, sepals, filaments, stigma, and anthers.

It localises to the plastid. It is found in the chloroplast. The catalysed reaction is L-seryl-[protein] + ATP = O-phospho-L-seryl-[protein] + ADP + H(+). It carries out the reaction L-threonyl-[protein] + ATP = O-phospho-L-threonyl-[protein] + ADP + H(+). Its function is as follows. Casein kinases are operationally defined by their preferential utilization of acidic proteins such as caseins as substrates. The alpha chain contains the catalytic site. Involved in the regulation of various developmental processes. Involved in the regulation of plant growth and flowering time. Involved in retrograde signaling in plant responses to abscisic acid (ABA) and heat stress. May act as an enhancing factor in abiotic stress signaling through modulation of the expression of some molecular players in retrograde signaling. Phosphorylates RuBisCo activase (RCA) at Thr-78. This chain is Casein kinase II subunit alpha-4, chloroplastic, found in Arabidopsis thaliana (Mouse-ear cress).